A 283-amino-acid polypeptide reads, in one-letter code: 3-methyl-2-oxobutanoate hydroxymethyltransferase (283 aa).

2 residues coordinate Mg(2+): Asp46 and Asp85. 3-methyl-2-oxobutanoate is bound by residues Asp46–Ser47, Asp85, and Lys115. Glu117 contacts Mg(2+). Glu184 (proton acceptor) is an active-site residue.

Belongs to the PanB family. In terms of assembly, homodecamer; pentamer of dimers. Mg(2+) is required as a cofactor.

Its subcellular location is the cytoplasm. The enzyme catalyses 3-methyl-2-oxobutanoate + (6R)-5,10-methylene-5,6,7,8-tetrahydrofolate + H2O = 2-dehydropantoate + (6S)-5,6,7,8-tetrahydrofolate. It functions in the pathway cofactor biosynthesis; (R)-pantothenate biosynthesis; (R)-pantoate from 3-methyl-2-oxobutanoate: step 1/2. In terms of biological role, catalyzes the reversible reaction in which hydroxymethyl group from 5,10-methylenetetrahydrofolate is transferred onto alpha-ketoisovalerate to form ketopantoate. This Acetivibrio thermocellus (strain ATCC 27405 / DSM 1237 / JCM 9322 / NBRC 103400 / NCIMB 10682 / NRRL B-4536 / VPI 7372) (Clostridium thermocellum) protein is 3-methyl-2-oxobutanoate hydroxymethyltransferase.